The sequence spans 156 residues: Endogenous retrovirus group K member 7 Pro protein (156 aa).

Positions 21 to 96 (FEGLVDTGAD…IPLNLWGRDL (76 aa)) constitute a Peptidase A2 domain. The active site involves Asp-26. Residues 111–156 (YSPTSQKIMTKMGYIPGKGLGKNEDGIKVPVEAKINQEREGIGYPF) form the G-patch domain.

It belongs to the peptidase A2 family. HERV class-II K(HML-2) subfamily. In terms of assembly, active as a homodimer. Autoproteolytically processed at the N-terminus. Expected C-terminal autoprocessing not detected. The sequence shown is that of the processed Pro protein.

It carries out the reaction Processing at the authentic HIV-1 PR recognition site and release of the mature p17 matrix and the p24 capsid protein, as a result of the cleavage of the -SQNY-|-PIVQ- cleavage site.. Retroviral proteases have roles in processing of the primary translation products and the maturation of the viral particle. Endogenous Pro proteins may have kept, lost or modified their original function during evolution. This endogenous protein has retained most of the characteristics of retroviral proteases. The chain is Endogenous retrovirus group K member 7 Pro protein (ERVK-7) from Homo sapiens (Human).